The following is a 347-amino-acid chain: Ribosomal RNA small subunit methyltransferase C (347 aa).

It belongs to the methyltransferase superfamily. RsmC family. As to quaternary structure, monomer.

It is found in the cytoplasm. The enzyme catalyses guanosine(1207) in 16S rRNA + S-adenosyl-L-methionine = N(2)-methylguanosine(1207) in 16S rRNA + S-adenosyl-L-homocysteine + H(+). Specifically methylates the guanine in position 1207 of 16S rRNA in the 30S particle. The sequence is that of Ribosomal RNA small subunit methyltransferase C from Shewanella baltica (strain OS195).